The sequence spans 468 residues: Bifunctional protein GlmU (468 aa).

The interval Met1–Arg233 is pyrophosphorylase. Residues Leu15–Gly18, Lys29, Gln79, and Gly84–Thr85 contribute to the UDP-N-acetyl-alpha-D-glucosamine site. Residue Asp109 coordinates Mg(2+). The UDP-N-acetyl-alpha-D-glucosamine site is built by Gly146, Glu159, Asn174, and Asn231. Asn231 lines the Mg(2+) pocket. The tract at residues Ser234 to Glu254 is linker. The N-acetyltransferase stretch occupies residues Gly255 to Gly468. UDP-N-acetyl-alpha-D-glucosamine contacts are provided by Arg336 and Lys354. The Proton acceptor role is filled by His366. UDP-N-acetyl-alpha-D-glucosamine contacts are provided by Tyr369 and Asn380. Acetyl-CoA-binding positions include Ala383, Asn389–Tyr390, and Ala426.

The protein in the N-terminal section; belongs to the N-acetylglucosamine-1-phosphate uridyltransferase family. It in the C-terminal section; belongs to the transferase hexapeptide repeat family. Homotrimer. Requires Mg(2+) as cofactor.

It is found in the cytoplasm. It carries out the reaction alpha-D-glucosamine 1-phosphate + acetyl-CoA = N-acetyl-alpha-D-glucosamine 1-phosphate + CoA + H(+). It catalyses the reaction N-acetyl-alpha-D-glucosamine 1-phosphate + UTP + H(+) = UDP-N-acetyl-alpha-D-glucosamine + diphosphate. It participates in nucleotide-sugar biosynthesis; UDP-N-acetyl-alpha-D-glucosamine biosynthesis; N-acetyl-alpha-D-glucosamine 1-phosphate from alpha-D-glucosamine 6-phosphate (route II): step 2/2. It functions in the pathway nucleotide-sugar biosynthesis; UDP-N-acetyl-alpha-D-glucosamine biosynthesis; UDP-N-acetyl-alpha-D-glucosamine from N-acetyl-alpha-D-glucosamine 1-phosphate: step 1/1. The protein operates within bacterial outer membrane biogenesis; LPS lipid A biosynthesis. In terms of biological role, catalyzes the last two sequential reactions in the de novo biosynthetic pathway for UDP-N-acetylglucosamine (UDP-GlcNAc). The C-terminal domain catalyzes the transfer of acetyl group from acetyl coenzyme A to glucosamine-1-phosphate (GlcN-1-P) to produce N-acetylglucosamine-1-phosphate (GlcNAc-1-P), which is converted into UDP-GlcNAc by the transfer of uridine 5-monophosphate (from uridine 5-triphosphate), a reaction catalyzed by the N-terminal domain. This chain is Bifunctional protein GlmU, found in Rubrobacter xylanophilus (strain DSM 9941 / JCM 11954 / NBRC 16129 / PRD-1).